The primary structure comprises 273 residues: Ribosomal RNA small subunit methyltransferase A (273 aa).

S-adenosyl-L-methionine is bound by residues asparagine 18, leucine 20, glycine 45, glutamate 66, aspartate 91, and asparagine 113.

The protein belongs to the class I-like SAM-binding methyltransferase superfamily. rRNA adenine N(6)-methyltransferase family. RsmA subfamily.

Its subcellular location is the cytoplasm. The enzyme catalyses adenosine(1518)/adenosine(1519) in 16S rRNA + 4 S-adenosyl-L-methionine = N(6)-dimethyladenosine(1518)/N(6)-dimethyladenosine(1519) in 16S rRNA + 4 S-adenosyl-L-homocysteine + 4 H(+). Functionally, specifically dimethylates two adjacent adenosines (A1518 and A1519) in the loop of a conserved hairpin near the 3'-end of 16S rRNA in the 30S particle. May play a critical role in biogenesis of 30S subunits. This is Ribosomal RNA small subunit methyltransferase A from Escherichia coli O1:K1 / APEC.